A 376-amino-acid polypeptide reads, in one-letter code: Succinyl-diaminopimelate desuccinylase (376 aa).

Residue His-67 participates in Zn(2+) binding. The active site involves Asp-69. Asp-100 provides a ligand contact to Zn(2+). Catalysis depends on Glu-134, which acts as the Proton acceptor. Glu-135, Glu-163, and His-349 together coordinate Zn(2+).

It belongs to the peptidase M20A family. DapE subfamily. As to quaternary structure, homodimer. Zn(2+) is required as a cofactor. Co(2+) serves as cofactor.

It catalyses the reaction N-succinyl-(2S,6S)-2,6-diaminopimelate + H2O = (2S,6S)-2,6-diaminopimelate + succinate. Its pathway is amino-acid biosynthesis; L-lysine biosynthesis via DAP pathway; LL-2,6-diaminopimelate from (S)-tetrahydrodipicolinate (succinylase route): step 3/3. In terms of biological role, catalyzes the hydrolysis of N-succinyl-L,L-diaminopimelic acid (SDAP), forming succinate and LL-2,6-diaminopimelate (DAP), an intermediate involved in the bacterial biosynthesis of lysine and meso-diaminopimelic acid, an essential component of bacterial cell walls. This is Succinyl-diaminopimelate desuccinylase from Xanthomonas campestris pv. campestris (strain B100).